A 279-amino-acid chain; its full sequence is MKRIFLFLATNIAVLVVINIVLAVLGINSRGGTGSLLAYSAVVGFTGSIISLLMSKFIAKQSVGAEVIDTPRTEEEAWLLNTVEAQARQWNLKTPEVAIYHSPEPNAFATGASRNSSLIAVSTGLLDHMTRDEVEAVLAHEMAHVGNGDMVTLTLIQGVVNTFVVFLSRIIANLIARNNDGSQSQGTYFLVSMVFQILFGFLASLIVMWFSRQREYRADAGAAKLVGAPKMISALQRLKGNPVDLPEEMNAMGIAGDTRDSLLSTHPSLDNRIARLKSL.

A run of 2 helical transmembrane segments spans residues 4–24 (IFLFLATNIAVLVVINIVLAV) and 34–54 (GSLLAYSAVVGFTGSIISLLM). A Zn(2+)-binding site is contributed by His140. The active site involves Glu141. His144 lines the Zn(2+) pocket. 2 helical membrane passes run 155 to 175 (LIQGVVNTFVVFLSRIIANLI) and 189 to 209 (FLVSMVFQILFGFLASLIVMW). Glu215 contributes to the Zn(2+) binding site.

This sequence belongs to the peptidase M48B family. It depends on Zn(2+) as a cofactor.

The protein localises to the cell inner membrane. The sequence is that of Protease HtpX homolog from Neisseria meningitidis serogroup B (strain ATCC BAA-335 / MC58).